The chain runs to 385 residues: Acetylornithine aminotransferase (385 aa).

Residues G94–T95 and F126 each bind pyridoxal 5'-phosphate. R129 provides a ligand contact to N(2)-acetyl-L-ornithine. D211–Q214 lines the pyridoxal 5'-phosphate pocket. K240 is modified (N6-(pyridoxal phosphate)lysine). Residue T267 participates in N(2)-acetyl-L-ornithine binding. T268 provides a ligand contact to pyridoxal 5'-phosphate.

The protein belongs to the class-III pyridoxal-phosphate-dependent aminotransferase family. ArgD subfamily. Homodimer. It depends on pyridoxal 5'-phosphate as a cofactor.

It is found in the cytoplasm. The catalysed reaction is N(2)-acetyl-L-ornithine + 2-oxoglutarate = N-acetyl-L-glutamate 5-semialdehyde + L-glutamate. It participates in amino-acid biosynthesis; L-arginine biosynthesis; N(2)-acetyl-L-ornithine from L-glutamate: step 4/4. The polypeptide is Acetylornithine aminotransferase (Thermotoga maritima (strain ATCC 43589 / DSM 3109 / JCM 10099 / NBRC 100826 / MSB8)).